The chain runs to 367 residues: 3-isopropylmalate dehydrogenase (367 aa).

80–93 (GKEWTHLPADEQPE) provides a ligand contact to NAD(+). R101, R111, R140, and D230 together coordinate substrate. The Mg(2+) site is built by D230, D254, and D258. 288–300 (GSAPDLKGKNIAN) is an NAD(+) binding site.

The protein belongs to the isocitrate and isopropylmalate dehydrogenases family. LeuB type 1 subfamily. Homodimer. It depends on Mg(2+) as a cofactor. The cofactor is Mn(2+).

The protein localises to the cytoplasm. The enzyme catalyses (2R,3S)-3-isopropylmalate + NAD(+) = 4-methyl-2-oxopentanoate + CO2 + NADH. It participates in amino-acid biosynthesis; L-leucine biosynthesis; L-leucine from 3-methyl-2-oxobutanoate: step 3/4. Its function is as follows. Catalyzes the oxidation of 3-carboxy-2-hydroxy-4-methylpentanoate (3-isopropylmalate) to 3-carboxy-4-methyl-2-oxopentanoate. The product decarboxylates to 4-methyl-2 oxopentanoate. This Buchnera aphidicola subsp. Cinara cedri (strain Cc) protein is 3-isopropylmalate dehydrogenase (leuB).